We begin with the raw amino-acid sequence, 113 residues long: Hydrogenase maturation factor HypA (113 aa).

Ni(2+) is bound at residue histidine 2. Zn(2+) is bound by residues cysteine 73, cysteine 76, cysteine 89, and cysteine 92.

It belongs to the HypA/HybF family.

In terms of biological role, involved in the maturation of [NiFe] hydrogenases. Required for nickel insertion into the metal center of the hydrogenase. In Prosthecochloris aestuarii (strain DSM 271 / SK 413), this protein is Hydrogenase maturation factor HypA.